The primary structure comprises 876 residues: GRB2-associated and regulator of MAPK protein (876 aa).

The tract at residues 9–318 is CABIT; the sequence is KDVKWSSASF…NLIKGEVWQD (310 aa). Tyr451 carries the post-translational modification Phosphotyrosine. Disordered stretches follow at residues 460–569 and 708–741; these read SVKR…TLSY and DRMLGDNSTKQSLSCPALPPRAPKPSEGNALSEP. The segment covering 461–471 has biased composition (polar residues); sequence VKRSGQPLTRS. Residues 532-549 are compositionally biased toward pro residues; the sequence is PPVPPRSSKPSSPTPSVP. Residues 556-569 show a composition bias toward polar residues; the sequence is VRQQTRSPSPTLSY. The SAM domain occupies 811–876; sequence LSVEEVSKSL…QFINGWRPKM (66 aa).

The protein belongs to the GAREM family.

Adapter protein that may provide a link between cell surface epidermal growth factor receptor and the MAPK/ERK signaling pathway. May promote cell proliferation. The chain is GRB2-associated and regulator of MAPK protein (garem1) from Xenopus laevis (African clawed frog).